Reading from the N-terminus, the 121-residue chain is Large ribosomal subunit protein bL12 (121 aa).

The protein belongs to the bacterial ribosomal protein bL12 family. In terms of assembly, homodimer. Part of the ribosomal stalk of the 50S ribosomal subunit. Forms a multimeric L10(L12)X complex, where L10 forms an elongated spine to which 2 to 4 L12 dimers bind in a sequential fashion. Binds GTP-bound translation factors.

Forms part of the ribosomal stalk which helps the ribosome interact with GTP-bound translation factors. Is thus essential for accurate translation. This is Large ribosomal subunit protein bL12 from Halalkalibacterium halodurans (strain ATCC BAA-125 / DSM 18197 / FERM 7344 / JCM 9153 / C-125) (Bacillus halodurans).